We begin with the raw amino-acid sequence, 406 residues long: Magnesium transporter NIPA4 (406 aa).

At 1-57 (MELRVANANGSCENGSIVSLYCSSQEVLCQIVRGISPEEPYNATLITWQERVRKKYG) the chain is on the extracellular side. N-linked (GlcNAc...) asparagine glycosylation is found at Asn9, Asn14, and Asn42. The helical transmembrane segment at 58–78 (FYIGVGLAFLSCFLIGTSVIL) threads the bilayer. At 79–126 (KKKGLIRLVATGATRAVNGGYGYLKDPMWWAGMATMSAGEVANFGAYA) the chain is on the cytoplasmic side. A helical membrane pass occupies residues 127 to 147 (FAPATVVTPLGALSVLISAIF). Topologically, residues 148-155 (SSYCLGES) are extracellular. The helical transmembrane segment at 156-176 (LNLLGKLGCVICMAGSTVMVI) threads the bilayer. The Cytoplasmic segment spans residues 177–197 (HAPKEEKVTTVAEMASKMKDT). Residues 198-218 (GFIVFAVLLVVSCLILIFIVA) traverse the membrane as a helical segment. Residues 219–225 (PRYGQRN) lie on the Extracellular side of the membrane. Residues 226-246 (ILIYIIICSVIGSFSVTAVKG) form a helical membrane-spanning segment. Over 247–263 (LGVTIRNFFQGLPVVRH) the chain is Cytoplasmic. A helical membrane pass occupies residues 264-284 (PLPYILSLILGLSIIIQVNFL). The Extracellular segment spans residues 285–295 (NRALDIFNTSL). Residue Asn292 is glycosylated (N-linked (GlcNAc...) asparagine). The chain crosses the membrane as a helical span at residues 296-316 (VFPIYYVFFTTVVVASSIVLF). Residues 317-326 (KEWYTMSAVD) are Cytoplasmic-facing. The chain crosses the membrane as a helical span at residues 327–347 (IVGTLSGFVTIILGVFMLHAF). The Extracellular portion of the chain corresponds to 348–406 (KDLDINQISLPHTHKNPTPAPAPEPTVIKLEDKNVLVDNIELASTPSPQQKPKVFMTDS).

This sequence belongs to the NIPA family.

Its subcellular location is the cell membrane. The catalysed reaction is Mg(2+)(in) = Mg(2+)(out). Functionally, acts as a Mg(2+) transporter. Can also transport other divalent cations such as Ba(2+), Sr(2+) and Fe(2+) but to a much less extent than Mg(2+). May be a receptor for ligands (trioxilins A3 and B3) from the hepoxilin pathway. The protein is Magnesium transporter NIPA4 (Nipal4) of Mus musculus (Mouse).